The chain runs to 590 residues: Probable lysosomal cobalamin transporter (590 aa).

Helical transmembrane passes span 8–28 (LIWVVYAIVFFLLVAVSSIFI), 46–66 (IFTLTALLATVLLLPVDVALV), 94–114 (AVAYYFLYSLDAVLCLLVVPF), 145–165 (TVAFILLTVILFLVGFFVPIG), 190–210 (ALTFALGLLITIGILVYVLYT), 314–334 (LLSGLLLLAIAMLVWVSMLLT), 348–367 (CGYILGKTNILNPINWVFVH), 376–396 (YILFVFLVLVFFCSSVVGIAT), 421–441 (ITTVMLTLITLALNYSISMVV), and 508–528 (FFGIVDFWAQFFFLGLSLLVF). The segment at 567–590 (WEDITGRASRSPQVSGSAGRGTRE) is disordered.

Belongs to the LIMR family. LMBRD1 subfamily.

The protein localises to the lysosome membrane. Probable lysosomal cobalamin transporter. Required to export cobalamin from lysosomes allowing its conversion to cofactors. The protein is Probable lysosomal cobalamin transporter of Ajellomyces capsulatus (strain NAm1 / WU24) (Darling's disease fungus).